The sequence spans 87 residues: UPF0512 protein B (87 aa).

Belongs to the UPF0512 family.

In Dictyostelium discoideum (Social amoeba), this protein is UPF0512 protein B.